The sequence spans 85 residues: ATP synthase subunit c (85 aa).

The next 2 membrane-spanning stretches (helical) occupy residues 1–21 and 53–73; these read MLAW…ALVG and LLFA…VALI.

The protein belongs to the ATPase C chain family. In terms of assembly, F-type ATPases have 2 components, F(1) - the catalytic core - and F(0) - the membrane proton channel. F(1) has five subunits: alpha(3), beta(3), gamma(1), delta(1), epsilon(1). F(0) has three main subunits: a(1), b(2) and c(10-14). The alpha and beta chains form an alternating ring which encloses part of the gamma chain. F(1) is attached to F(0) by a central stalk formed by the gamma and epsilon chains, while a peripheral stalk is formed by the delta and b chains.

The protein localises to the cell inner membrane. Its function is as follows. F(1)F(0) ATP synthase produces ATP from ADP in the presence of a proton or sodium gradient. F-type ATPases consist of two structural domains, F(1) containing the extramembraneous catalytic core and F(0) containing the membrane proton channel, linked together by a central stalk and a peripheral stalk. During catalysis, ATP synthesis in the catalytic domain of F(1) is coupled via a rotary mechanism of the central stalk subunits to proton translocation. Functionally, key component of the F(0) channel; it plays a direct role in translocation across the membrane. A homomeric c-ring of between 10-14 subunits forms the central stalk rotor element with the F(1) delta and epsilon subunits. This chain is ATP synthase subunit c, found in Dictyoglomus turgidum (strain DSM 6724 / Z-1310).